The primary structure comprises 174 residues: Small ribosomal subunit protein uS5 (174 aa).

The S5 DRBM domain occupies 16-79 (FSELIVSVRR…NAARKNMIRV (64 aa)).

The protein belongs to the universal ribosomal protein uS5 family. In terms of assembly, part of the 30S ribosomal subunit. Contacts proteins S4 and S8.

Functionally, with S4 and S12 plays an important role in translational accuracy. In terms of biological role, located at the back of the 30S subunit body where it stabilizes the conformation of the head with respect to the body. The sequence is that of Small ribosomal subunit protein uS5 from Ehrlichia ruminantium (strain Gardel).